Reading from the N-terminus, the 246-residue chain is Phosphate import ATP-binding protein PstB (246 aa).

In terms of domain architecture, ABC transporter spans 3-241 (AKTTNLNLFY…PKQEKTKAYL (239 aa)). Residue 35–42 (GASGCGKS) coordinates ATP.

It belongs to the ABC transporter superfamily. Phosphate importer (TC 3.A.1.7) family. In terms of assembly, the complex is composed of two ATP-binding proteins (PstB), two transmembrane proteins (PstC and PstA) and a solute-binding protein (PstS).

The protein resides in the cell inner membrane. The catalysed reaction is phosphate(out) + ATP + H2O = ADP + 2 phosphate(in) + H(+). In terms of biological role, part of the ABC transporter complex PstSACB involved in phosphate import. Responsible for energy coupling to the transport system. In Campylobacter jejuni subsp. jejuni serotype O:2 (strain ATCC 700819 / NCTC 11168), this protein is Phosphate import ATP-binding protein PstB.